We begin with the raw amino-acid sequence, 410 residues long: Schlafen-like protein 1 (410 aa).

Disordered regions lie at residues 1–20 (MSLR…VMSQ) and 141–199 (LHHR…SGVR). The segment covering 8-20 (AQTQMWESPVMSQ) has biased composition (polar residues). Residues 154–173 (SHSPGPSPGPSPGLRHPPLP) are compositionally biased toward pro residues. 264-271 (GVEDSGLV) contacts ATP. Residues 370-401 (QKWAMELGKLEEKVKVLTLEKEQLQQQLRQRQ) are a coiled coil.

Belongs to the Schlafen family. Subgroup I subfamily.

This is Schlafen-like protein 1 (Slfnl1) from Mus musculus (Mouse).